The sequence spans 196 residues: Molybdenum cofactor guanylyltransferase (196 aa).

Residues 10-12 (LAG), lysine 23, asparagine 51, aspartate 69, and aspartate 99 contribute to the GTP site. Aspartate 99 contacts Mg(2+).

This sequence belongs to the MobA family. Monomer. It depends on Mg(2+) as a cofactor.

The protein resides in the cytoplasm. The enzyme catalyses Mo-molybdopterin + GTP + H(+) = Mo-molybdopterin guanine dinucleotide + diphosphate. Transfers a GMP moiety from GTP to Mo-molybdopterin (Mo-MPT) cofactor (Moco or molybdenum cofactor) to form Mo-molybdopterin guanine dinucleotide (Mo-MGD) cofactor. This Shewanella woodyi (strain ATCC 51908 / MS32) protein is Molybdenum cofactor guanylyltransferase.